Here is a 316-residue protein sequence, read N- to C-terminus: Pantothenate kinase (316 aa).

Residue 95 to 102 (GSVAVGKS) participates in ATP binding.

Belongs to the prokaryotic pantothenate kinase family.

The protein resides in the cytoplasm. The catalysed reaction is (R)-pantothenate + ATP = (R)-4'-phosphopantothenate + ADP + H(+). Its pathway is cofactor biosynthesis; coenzyme A biosynthesis; CoA from (R)-pantothenate: step 1/5. The sequence is that of Pantothenate kinase from Erwinia tasmaniensis (strain DSM 17950 / CFBP 7177 / CIP 109463 / NCPPB 4357 / Et1/99).